The sequence spans 170 residues: Ribosome-binding factor A (170 aa).

The interval 123-170 is disordered; sequence AKAGVYAGDEDPYVKPRVIGEDEDDDDEEGDEDGDDVDRSAPGYEPAH. Over residues 143 to 158 the composition is skewed to acidic residues; that stretch reads EDEDDDDEEGDEDGDD.

The protein belongs to the RbfA family. In terms of assembly, monomer. Binds 30S ribosomal subunits, but not 50S ribosomal subunits or 70S ribosomes.

The protein resides in the cytoplasm. One of several proteins that assist in the late maturation steps of the functional core of the 30S ribosomal subunit. Associates with free 30S ribosomal subunits (but not with 30S subunits that are part of 70S ribosomes or polysomes). Required for efficient processing of 16S rRNA. May interact with the 5'-terminal helix region of 16S rRNA. This Clavibacter sepedonicus (Clavibacter michiganensis subsp. sepedonicus) protein is Ribosome-binding factor A.